The sequence spans 306 residues: Reticulocalbin-2 (306 aa).

The N-terminal stretch at 1-22 (MESPTLLGLLLLLLGGPGTSLG) is a signal peptide. 6 consecutive EF-hand domains span residues 50-85 (EQQK…SFKS), 86-121 (YIIE…RVID), 144-173 (KKRF…EEAD), 175-210 (MKEF…DPAA), 226-251 (NDYD…NNEG), and 252-287 (LAQE…FLNS). Ca(2+)-binding residues include Asp99, Asp101, Asp103, Arg105, and Glu110. Asp188, Asp190, Asp192, Glu199, Asp229, Asp231, Asp233, Lys235, Glu240, Asp265, Asp267, Asp269, Arg271, and Glu276 together coordinate Ca(2+).

It belongs to the CREC family. May bind phospholipase A2, since the rat reticulocalbin-2 has been isolated on the phospholipase complex taipoxin columns. As to expression, expressed by the venom gland.

It is found in the secreted. This Crotalus adamanteus (Eastern diamondback rattlesnake) protein is Reticulocalbin-2.